Reading from the N-terminus, the 172-residue chain is Shikimate kinase (172 aa).

Position 11-16 (11-16 (GAGKST)) interacts with ATP. S15 lines the Mg(2+) pocket. The substrate site is built by D33, R57, and G79. ATP is bound at residue R117. R136 provides a ligand contact to substrate. R153 lines the ATP pocket.

Belongs to the shikimate kinase family. Monomer. Requires Mg(2+) as cofactor.

Its subcellular location is the cytoplasm. It carries out the reaction shikimate + ATP = 3-phosphoshikimate + ADP + H(+). Its pathway is metabolic intermediate biosynthesis; chorismate biosynthesis; chorismate from D-erythrose 4-phosphate and phosphoenolpyruvate: step 5/7. Functionally, catalyzes the specific phosphorylation of the 3-hydroxyl group of shikimic acid using ATP as a cosubstrate. The polypeptide is Shikimate kinase (Pseudomonas fluorescens (strain Pf0-1)).